Reading from the N-terminus, the 652-residue chain is Gametogenetin (652 aa).

5 disordered regions span residues 1–39, 52–237, 251–273, 291–473, and 488–576; these read MGNLQSEPSAGGGSRKVQPSDRAPDSRRTSLVEPEMTSQ, PGSA…DSES, PSLAPPAASSSLAAKASLGGGGG, QGPL…GHKE, and LAAD…GAAN. Composition is skewed to basic and acidic residues over residues 18–30 and 124–133; these read QPSDRAPDSRRTS and RLLEASHRGQ. The interval 123–486 is interaction with GGNBP1; the sequence is RRLLEASHRG…APTAAPALPP (364 aa). Pro residues-rich tracts occupy residues 138-149 and 163-178; these read SLRPLKPPPPPR and QFPPPLETWKPPPPLP. Residues 201–212 show a composition bias toward polar residues; it reads ESQAGPRNQGQT. Composition is skewed to low complexity over residues 213–230, 251–267, and 299–312; these read AGRARGGAPPHAGEGEMA, PSLAPPAASSSLAAKAS, and ARPLGEVSRGAQEA. Residue Ser-389 is modified to Phosphoserine. Residues 407-422 are compositionally biased toward low complexity; it reads APALLAPPTFIFPAPT. 2 stretches are compositionally biased toward pro residues: residues 428–466 and 495–513; these read RPGPPGLQELPPLPPPTPPPTLQPPALQPTPLPVAPPLT and APSPAPAPTVAEPSPPVSA. An interactions with ZNF403/GGNBP2 and OAZ3 region spans residues 491-652; that stretch reads DQAPAPSPAP…HYDLQATHSN (162 aa). The span at 523 to 532 shows a compositional bias: basic residues; sequence TRTRRNKGSR. Positions 538 to 552 are enriched in basic and acidic residues; sequence TRKDGLHGDGPRERA.

Interacts with FANCL, GGNBP1 and ZNF403/GGNBP2.

In terms of biological role, may be involved in spermatogenesis. This is Gametogenetin (GGN) from Homo sapiens (Human).